The sequence spans 181 residues: Oligoribonuclease (181 aa).

The region spanning 8–171 (LIWIDLEMTG…DDIRESIAEL (164 aa)) is the Exonuclease domain. Tyr129 is an active-site residue.

This sequence belongs to the oligoribonuclease family.

It is found in the cytoplasm. 3'-to-5' exoribonuclease specific for small oligoribonucleotides. The polypeptide is Oligoribonuclease (Vibrio cholerae serotype O1 (strain ATCC 39541 / Classical Ogawa 395 / O395)).